Reading from the N-terminus, the 485-residue chain is Glutamate--tRNA ligase (485 aa).

Residues 11–21 carry the 'HIGH' region motif; the sequence is PSPTGYMHVGN. The Zn(2+) site is built by Cys-108, Cys-110, Cys-135, and Asp-137. The 'KMSKS' region motif lies at 252 to 256; sequence KLSKR. Lys-255 provides a ligand contact to ATP.

This sequence belongs to the class-I aminoacyl-tRNA synthetase family. Glutamate--tRNA ligase type 1 subfamily. As to quaternary structure, monomer. It depends on Zn(2+) as a cofactor.

The protein localises to the cytoplasm. The catalysed reaction is tRNA(Glu) + L-glutamate + ATP = L-glutamyl-tRNA(Glu) + AMP + diphosphate. In terms of biological role, catalyzes the attachment of glutamate to tRNA(Glu) in a two-step reaction: glutamate is first activated by ATP to form Glu-AMP and then transferred to the acceptor end of tRNA(Glu). The protein is Glutamate--tRNA ligase of Clostridium botulinum (strain Loch Maree / Type A3).